The chain runs to 341 residues: Protein quaking-A (341 aa).

The region spanning 87-153 is the KH domain; that stretch reads FVPVKEYPDY…WEHLNEDLHV (67 aa). The SH3-binding motif lies at 276–279; that stretch reads PPTP. The short motif at 324 to 330 is the Nuclear localization signal element; sequence RVHPYQR.

Belongs to the quaking family. As to quaternary structure, homodimer; does not require RNA to homodimerize.

The protein resides in the cytoplasm. Its subcellular location is the nucleus. In terms of biological role, RNA reader protein, which recognizes and binds specific RNAs, thereby regulating RNA metabolic processes, such as pre-mRNA splicing, circular RNA (circRNA) formation, mRNA export, mRNA stability and/or translation. Involved in various cellular processes, such as mRNA storage into stress granules, apoptosis, interferon response, glial cell fate and development. Binds to the 5'-NACUAAY-N(1,20)-UAAY-3' RNA core sequence. Acts as a mRNA modification reader that specifically recognizes and binds mRNA transcripts modified by internal N(7)-methylguanine (m7G). Promotes the formation of circular RNAs (circRNAs): acts by binding to sites flanking circRNA-forming exons. CircRNAs are produced by back-splicing circularization of pre-mRNAs. Required to protect and promote stability of mRNAs which promotes oligodendrocyte differentiation. Acts as an important regulator of muscle development: required during early skeletal myofibril formation by regulating the accumulation of the muscle-specific tropomyosin-3 (tpm3) transcripts. This chain is Protein quaking-A, found in Danio rerio (Zebrafish).